Here is a 351-residue protein sequence, read N- to C-terminus: Photosystem II D2 protein (351 aa).

A helical membrane pass occupies residues 39–59 (CAYMAIGGWLTGTTFATSWYT). His-116 contributes to the chlorophyll a binding site. A helical transmembrane segment spans residues 123–139 (GFMLRQFEIARLVGVRP). Residues Gln-128 and Asn-141 each coordinate pheophytin a. Residues 151–164 (LFVSVFLIYPLGQS) form a helical membrane-spanning segment. A chlorophyll a-binding site is contributed by His-196. A helical transmembrane segment spans residues 206–226 (GALLCAIHGATVENTLFEDGD). 2 residues coordinate a plastoquinone: His-213 and Phe-260. His-213 is a binding site for Fe cation. A Fe cation-binding site is contributed by His-267. The chain crosses the membrane as a helical span at residues 277–293 (GLWMSAIGVVGLALNLR).

Belongs to the reaction center PufL/M/PsbA/D family. PSII is composed of 1 copy each of membrane proteins PsbA, PsbB, PsbC, PsbD, PsbE, PsbF, PsbH, PsbI, PsbJ, PsbK, PsbL, PsbM, PsbT, PsbX, PsbY, PsbZ, Psb30/Ycf12, peripheral proteins PsbO, CyanoQ (PsbQ), PsbU, PsbV and a large number of cofactors. It forms dimeric complexes. It depends on The D1/D2 heterodimer binds P680, chlorophylls that are the primary electron donor of PSII, and subsequent electron acceptors. It shares a non-heme iron and each subunit binds pheophytin, quinone, additional chlorophylls, carotenoids and lipids. There is also a Cl(-1) ion associated with D1 and D2, which is required for oxygen evolution. The PSII complex binds additional chlorophylls, carotenoids and specific lipids. as a cofactor.

It localises to the cellular thylakoid membrane. The catalysed reaction is 2 a plastoquinone + 4 hnu + 2 H2O = 2 a plastoquinol + O2. In terms of biological role, photosystem II (PSII) is a light-driven water:plastoquinone oxidoreductase that uses light energy to abstract electrons from H(2)O, generating O(2) and a proton gradient subsequently used for ATP formation. It consists of a core antenna complex that captures photons, and an electron transfer chain that converts photonic excitation into a charge separation. The D1/D2 (PsbA/PsbD) reaction center heterodimer binds P680, the primary electron donor of PSII as well as several subsequent electron acceptors. D2 is needed for assembly of a stable PSII complex. The sequence is that of Photosystem II D2 protein from Prochlorothrix hollandica.